The chain runs to 98 residues: Small ribosomal subunit protein bS6c (98 aa).

This sequence belongs to the bacterial ribosomal protein bS6 family.

The protein localises to the plastid. The protein resides in the chloroplast. In terms of biological role, binds together with bS18 to 16S ribosomal RNA. In Phaeodactylum tricornutum (strain CCAP 1055/1), this protein is Small ribosomal subunit protein bS6c.